The primary structure comprises 673 residues: Sodium/myo-inositol cotransporter 2 (673 aa).

Topologically, residues 1–27 (MESTTSSPQPPPSDALEAFPQKSMEPA) are extracellular. Residues 28–48 (DIVVLVLYFLFVLAVGLWSTV) traverse the membrane as a helical segment. Topologically, residues 49–56 (RTKRDTVK) are cytoplasmic. Residues 57-77 (GYFLAGGDMVWWPVGASLFAS) form a helical membrane-spanning segment. Residue N78 is a topological domain, extracellular. A helical membrane pass occupies residues 79–99 (VGSGHFIGLAGSGAAVGISVA). The Cytoplasmic segment spans residues 100–102 (AYE). A helical transmembrane segment spans residues 103–123 (LNGLFSVLMLAWIFLPIYIAG). At 124–180 (QVTTMPEYLKRRFGGSRIPITLASIYPSTHSLTILQVDMYAGAIFIQQSLHLDLYLA) the chain is on the extracellular side. The chain crosses the membrane as a helical span at residues 181–201 (IVGLLAVTALYTVAGGLAAVI). Over 202-208 (YTDALQT) the chain is Cytoplasmic. Residues 209-229 (VIMLIGAFILMGYSFAAVGGM) form a helical membrane-spanning segment. The Extracellular segment spans residues 230-272 (EGLKDQYFLALASNRSENSSCGLPREDAFHIFRDPLTSDLPWP). Residues 273–293 (GILFGMSIPSLWYWCTDQVIV) traverse the membrane as a helical segment. The Cytoplasmic segment spans residues 294 to 308 (QRSLAAKNLSHAKGG). A helical membrane pass occupies residues 309–329 (SLMAAYLKVLPLFLMVFPGMV). Residues 330–375 (SRILFPDQVACAHPDICQRVCSNPSGCSDIAYPKLVLELLPTGLRG) are Extracellular-facing. A helical membrane pass occupies residues 376–396 (LMMAVMVAALMSSLTSIFNSA). Over 397 to 418 (STIFTMDLWHHIRPRASERELM) the chain is Cytoplasmic. Residues 419–439 (IVGRVFVLALVLVSILWIPVV) traverse the membrane as a helical segment. Residues 440-446 (QASQGGQ) are Extracellular-facing. The helical transmembrane segment at 447–467 (LFIYIQSISSYLQPPVAVVFI) threads the bilayer. The Cytoplasmic portion of the chain corresponds to 468–479 (MGCFWKRTNEKG). A helical transmembrane segment spans residues 480–500 (AFSGLILGLLLGLVRLILDFV). Residues 501 to 521 (YVQPRCDQPDDRPAVVKDVHY) lie on the Extracellular side of the membrane. The helical transmembrane segment at 522–542 (LYFSMILSSTTLITVFTVSWF) threads the bilayer. Over 543–652 (TETPSKEMVS…SLEENPLVKT (110 aa)) the chain is Cytoplasmic. The helical transmembrane segment at 653 to 673 (LLDVNCIVCISCAIFLWGYFA) threads the bilayer.

The protein belongs to the sodium:solute symporter (SSF) (TC 2.A.21) family. In terms of tissue distribution, expressed in kidney and small intestine.

It is found in the membrane. The protein localises to the apical cell membrane. It catalyses the reaction myo-inositol(out) + 2 Na(+)(out) = myo-inositol(in) + 2 Na(+)(in). The catalysed reaction is 1D-chiro-inositol(out) + 2 Na(+)(out) = 1D-chiro-inositol(in) + 2 Na(+)(in). It carries out the reaction D-glucose(out) + 2 Na(+)(out) = D-glucose(in) + 2 Na(+)(in). The enzyme catalyses D-xylose(out) + 2 Na(+)(out) = D-xylose(in) + 2 Na(+)(in). MI transport activity inhibited by D-chiro-inositol (DCI), phlorizin (Pz) and sodium (Na(+)). Insulin increases D-chiro-inositol uptake. Involved in the sodium-dependent cotransport of myo-inositol (MI) with a Na(+):MI stoichiometry of 2:1. Exclusively responsible for apical MI transport and absorption in intestine. Can also transport D-chiro-inositol (DCI) but not L-fucose. Exhibits stereospecific cotransport of both D-glucose and D-xylose. May induce apoptosis through the TNF-alpha, PDCD1 pathway. May play a role in the regulation of MI concentration in serum, involving reabsorption in at least the proximal tubule of the kidney. This chain is Sodium/myo-inositol cotransporter 2, found in Rattus norvegicus (Rat).